A 68-amino-acid chain; its full sequence is Basic phospholipase A2 homolog BdipTx-I (68 aa).

Cys28 and Cys44 are disulfide-bonded.

It belongs to the phospholipase A2 family. Group II subfamily. K49 sub-subfamily. As to expression, expressed by the venom gland.

Its subcellular location is the secreted. Functionally, snake venom phospholipase A2 (PLA2) that lacks enzymatic activity. Is myotoxic, induces edema, and causes systemic effects (renal changes that lead to proteinuria) on mice. A model of myotoxic mechanism has been proposed: an apo Lys49-PLA2 is activated by the entrance of a hydrophobic molecule (e.g. fatty acid) at the hydrophobic channel of the protein leading to a reorientation of a monomer. This reorientation causes a transition between 'inactive' to 'active' states, causing alignment of C-terminal and membrane-docking sites (MDoS) side-by-side and putting the membrane-disruption sites (MDiS) in the same plane, exposed to solvent and in a symmetric position for both monomers. The MDoS region stabilizes the toxin on membrane by the interaction of charged residues with phospholipid head groups. Subsequently, the MDiS region destabilizes the membrane with penetration of hydrophobic residues. This insertion causes a disorganization of the membrane, allowing an uncontrolled influx of ions (i.e. calcium and sodium), and eventually triggering irreversible intracellular alterations and cell death. The polypeptide is Basic phospholipase A2 homolog BdipTx-I (Bothrops diporus (Chaco lancehead)).